Consider the following 286-residue polypeptide: 4-hydroxy-3-methylbut-2-enyl diphosphate reductase (286 aa).

C12 is a [4Fe-4S] cluster binding site. 2 residues coordinate (2E)-4-hydroxy-3-methylbut-2-enyl diphosphate: H47 and H80. Residues H47 and H80 each contribute to the dimethylallyl diphosphate site. 2 residues coordinate isopentenyl diphosphate: H47 and H80. Residue C102 participates in [4Fe-4S] cluster binding. H130 provides a ligand contact to (2E)-4-hydroxy-3-methylbut-2-enyl diphosphate. A dimethylallyl diphosphate-binding site is contributed by H130. H130 serves as a coordination point for isopentenyl diphosphate. Residue E132 is the Proton donor of the active site. T170 lines the (2E)-4-hydroxy-3-methylbut-2-enyl diphosphate pocket. C198 provides a ligand contact to [4Fe-4S] cluster. 3 residues coordinate (2E)-4-hydroxy-3-methylbut-2-enyl diphosphate: S226, N228, and S270. Positions 226, 228, and 270 each coordinate dimethylallyl diphosphate. Positions 226, 228, and 270 each coordinate isopentenyl diphosphate.

It belongs to the IspH family. Requires [4Fe-4S] cluster as cofactor.

It catalyses the reaction isopentenyl diphosphate + 2 oxidized [2Fe-2S]-[ferredoxin] + H2O = (2E)-4-hydroxy-3-methylbut-2-enyl diphosphate + 2 reduced [2Fe-2S]-[ferredoxin] + 2 H(+). It carries out the reaction dimethylallyl diphosphate + 2 oxidized [2Fe-2S]-[ferredoxin] + H2O = (2E)-4-hydroxy-3-methylbut-2-enyl diphosphate + 2 reduced [2Fe-2S]-[ferredoxin] + 2 H(+). It functions in the pathway isoprenoid biosynthesis; dimethylallyl diphosphate biosynthesis; dimethylallyl diphosphate from (2E)-4-hydroxy-3-methylbutenyl diphosphate: step 1/1. The protein operates within isoprenoid biosynthesis; isopentenyl diphosphate biosynthesis via DXP pathway; isopentenyl diphosphate from 1-deoxy-D-xylulose 5-phosphate: step 6/6. Functionally, catalyzes the conversion of 1-hydroxy-2-methyl-2-(E)-butenyl 4-diphosphate (HMBPP) into a mixture of isopentenyl diphosphate (IPP) and dimethylallyl diphosphate (DMAPP). Acts in the terminal step of the DOXP/MEP pathway for isoprenoid precursor biosynthesis. In Desulfovibrio desulfuricans (strain ATCC 27774 / DSM 6949 / MB), this protein is 4-hydroxy-3-methylbut-2-enyl diphosphate reductase.